A 371-amino-acid chain; its full sequence is 4-hydroxy-3-methylbut-2-en-1-yl diphosphate synthase (flavodoxin) (371 aa).

[4Fe-4S] cluster is bound by residues C269, C272, C304, and E311.

The protein belongs to the IspG family. The cofactor is [4Fe-4S] cluster.

The enzyme catalyses (2E)-4-hydroxy-3-methylbut-2-enyl diphosphate + oxidized [flavodoxin] + H2O + 2 H(+) = 2-C-methyl-D-erythritol 2,4-cyclic diphosphate + reduced [flavodoxin]. Its pathway is isoprenoid biosynthesis; isopentenyl diphosphate biosynthesis via DXP pathway; isopentenyl diphosphate from 1-deoxy-D-xylulose 5-phosphate: step 5/6. In terms of biological role, converts 2C-methyl-D-erythritol 2,4-cyclodiphosphate (ME-2,4cPP) into 1-hydroxy-2-methyl-2-(E)-butenyl 4-diphosphate. This chain is 4-hydroxy-3-methylbut-2-en-1-yl diphosphate synthase (flavodoxin), found in Acinetobacter baumannii (strain AB307-0294).